The chain runs to 137 residues: Large-conductance mechanosensitive channel (137 aa).

2 helical membrane passes run 10 to 30 (FAMRGNVVDLAVGVIIGAAFG) and 76 to 96 (GTFIQSIFDFVIVALAIFSAV).

This sequence belongs to the MscL family. Homopentamer.

It localises to the cell inner membrane. Functionally, channel that opens in response to stretch forces in the membrane lipid bilayer. May participate in the regulation of osmotic pressure changes within the cell. The polypeptide is Large-conductance mechanosensitive channel (Yersinia pseudotuberculosis serotype O:1b (strain IP 31758)).